The chain runs to 315 residues: Homoserine kinase (315 aa).

97 to 107 is an ATP binding site; the sequence is PPARGLGSSAT.

Belongs to the GHMP kinase family. Homoserine kinase subfamily.

It is found in the cytoplasm. It carries out the reaction L-homoserine + ATP = O-phospho-L-homoserine + ADP + H(+). It participates in amino-acid biosynthesis; L-threonine biosynthesis; L-threonine from L-aspartate: step 4/5. Its function is as follows. Catalyzes the ATP-dependent phosphorylation of L-homoserine to L-homoserine phosphate. In Synechococcus sp. (strain WH7803), this protein is Homoserine kinase.